The primary structure comprises 237 residues: Lysophospholipase-like protein 1 (237 aa).

At Ala-2 the chain carries N-acetylalanine. Catalysis depends on charge relay system residues Ser-124, Asp-179, and His-211.

It belongs to the AB hydrolase superfamily. AB hydrolase 2 family.

It is found in the cytoplasm. Its subcellular location is the cytosol. It carries out the reaction S-hexadecanoyl-L-cysteinyl-[protein] + H2O = L-cysteinyl-[protein] + hexadecanoate + H(+). Its function is as follows. Palmitoyl thioesterase that catalyzes depalmitoylation of CGAS and KCNMA1. Acts as a regulator of innate immunity by mediating depalmitoylation of CGAS, thereby preventing CGAS homodimerization and cyclic GMP-AMP synthase activity. Does not exhibit phospholipase nor triacylglycerol lipase activity, able to hydrolyze only short chain substrates due to its shallow active site. In Pongo abelii (Sumatran orangutan), this protein is Lysophospholipase-like protein 1.